Here is a 356-residue protein sequence, read N- to C-terminus: Probable cysteine protease RDL6 (356 aa).

The N-terminal stretch at 1–26 (MGFVRPVCMTILFLLIVFVLSAPSSA) is a signal peptide. Residues 27–132 (MDLPATSGGH…RRYVPLAGDQ (106 aa)) constitute a propeptide, activation peptide. N-linked (GlcNAc...) asparagine glycosylation is found at Asn37 and Asn86. Intrachain disulfides connect Cys154/Cys195, Cys188/Cys229, and Cys288/Cys339. Cys157 is a catalytic residue. Residues His294 and Asn314 contribute to the active site.

The protein belongs to the peptidase C1 family.

Functionally, probable thiol protease. The chain is Probable cysteine protease RDL6 from Arabidopsis thaliana (Mouse-ear cress).